The primary structure comprises 70 residues: DNA-directed RNA polymerase subunit omega (70 aa).

It belongs to the RNA polymerase subunit omega family. The RNAP catalytic core consists of 2 alpha, 1 beta, 1 beta' and 1 omega subunit. When a sigma factor is associated with the core the holoenzyme is formed, which can initiate transcription.

It carries out the reaction RNA(n) + a ribonucleoside 5'-triphosphate = RNA(n+1) + diphosphate. In terms of biological role, promotes RNA polymerase assembly. Latches the N- and C-terminal regions of the beta' subunit thereby facilitating its interaction with the beta and alpha subunits. The sequence is that of DNA-directed RNA polymerase subunit omega from Clostridium perfringens (strain ATCC 13124 / DSM 756 / JCM 1290 / NCIMB 6125 / NCTC 8237 / Type A).